Reading from the N-terminus, the 656-residue chain is Phosphoprotein 85 (656 aa).

Disordered regions lie at residues 1 to 174 (MSSR…EGDE) and 615 to 656 (NGNH…EYCC). Residues 46–55 (SATEDLDRME) are compositionally biased toward basic and acidic residues. Low complexity-rich tracts occupy residues 59-70 (SPYSVSSDAPSS) and 140-160 (DNSS…RSTS). The segment covering 625–634 (SPPPPLPPRD) has biased composition (pro residues). The segment covering 635 to 656 (YPQRDERDRHRRDRRDSGEYCC) has biased composition (basic and acidic residues).

The protein belongs to the herpesviridae pp85 family. In terms of processing, phosphorylated.

The protein localises to the virion tegument. It localises to the host cytoplasm. The protein is Phosphoprotein 85 (UL25) of Homo sapiens (Human).